A 51-amino-acid chain; its full sequence is uncharacterized protein (51 aa).

In terms of biological role, this protein is non-essential for virus function. This is an uncharacterized protein from Sulfolobus spindle-shape virus 1 (SSV1).